The primary structure comprises 1038 residues: MDPNTIIEALRGTMDPALREAAERQLNEAHKSLNFVSTLLQITMSEQLDLPVRQAGVIYLKNMITQYWPDRETAPGDISPYTIPEEDRHCIRENIVEAIIHSPELIRVQLTTCIHHIIKHDYPSRWTAIVDKIGFYLQSDNSACWLGILLCLYQLVKNYEYKKPEERSPLVAAMQHFLPVLKDRFIQLLSDQSDQSVLIQKQIFKIFYALVQYTLPLELINQQNLTEWIEILKTVVNRDVPNETLQVEEDDRPELPWWKCKKWALHILARLFERYGSPGNVSKEYNEFAEVFLKAFAVGVQQVLLKVLYQYKEKQYMAPRVLQQTLNYINQGVSHALTWKNLKPHIQGIIQDVIFPLMCYTDADEELWQEDPYEYIRMKFDVFEDFISPTTAAQTLLFTACSKRKEVLQKTMGFCYQILTEPNADPRKKDGALHMIGSLAEILLKKKIYKDQMEYMLQNHVFPLFSSELGYMRARACWVLHYFCEVKFKSDQNLQTALELTRRCLIDDREMPVKVEAAIALQVLISNQEKAKEYITPFIRPVMQALLHIIRETENDDLTNVIQKMICEYSEEVTPIAVEMTQHLAMTFNQVIQTGPDEEGSDDKAVTAMGILNTIDTLLSVVEDHKEITQQLEGICLQVIGTVLQQHVLEFYEEIFSLAHSLTCQQVSPQMWQLLPLVFEVFQQDGFDYFTDMMPLLHNYVTVDTDTLLSDTKYLEMIYSMCKKVLTGVAGEDAECHAAKLLEVIILQCKGRGIDQCIPLFVEAALERLTREVKTSELRTMCLQVAIAALYYNPHLLLNTLENLRFPNNVEPVTNHFITQWLNDVDCFLGLHDRKMCVLGLCALIDMEQIPQVLNQVSGQILPAFILLFNGLKRAYACHAEHENDSDDDDEAEDDDETEELGSDEDDIDEDGQEYLEILAKQAGEDGDDEDWEEDDAEETALEGYSTIIDDEDNPVDEYQIFKAIFQTIQNRNPVWYQALTHGLNEEQRKQLQDIATLADQRRAAHESKMIEKHGGYKFSAPVVPSSFNFGGPAPGMN.

An N-acetylmethionine modification is found at Met-1. Residues 22–101 (AERQLNEAHK…RENIVEAIIH (80 aa)) enclose the Importin N-terminal domain. Positions 881–910 (EHENDSDDDDEAEDDDETEELGSDEDDIDE) are disordered. Residues 884 to 910 (NDSDDDDEAEDDDETEELGSDEDDIDE) show a composition bias toward acidic residues. Residue Ser-886 is modified to Phosphoserine. Phosphothreonine is present on Thr-898. Residues Ser-903 and Ser-1020 each carry the phosphoserine modification.

It belongs to the importin beta family. In terms of assembly, forms a heterodimer with KPNB1. Interacts with histone H1. Interacts with H2A, H2B, H3 and H4 histones. Interacts with SNUPN and XPO1. Interacts with RPS7 and RPL5. Interacts with RPL23A (via BIB domain). Binds directly to nuclear pore complexes. Interacts with SMAD4 and NUP93; translocates SMAD4 to the nucleus through the NPC upon BMP7 stimulation resulting in activation of SMAD4 signaling. Interacts with phosphorylated SMAD2; the interaction facilitates translocation of SMAD2 to the nucleus. Interacts with SRP19. Interacts with RUNX2; the interaction inhibits RUNX2 nuclear translocation in osteoblasts. Interacts with HDAC6, DLX3 and KLF4; the interaction facilitates HDAC6, DLX3 and KLF4 nuclear translocation in dental papilla cells. (Microbial infection) Interacts with HIV-1 reverse transcription complex integrase and rev.

It is found in the cytoplasm. The protein resides in the nucleus. Its function is as follows. Functions in nuclear protein import, either by acting as autonomous nuclear transport receptor or as an adapter-like protein in association with the importin-beta subunit KPNB1. Acting autonomously, is thought to serve itself as receptor for nuclear localization signals (NLS) and to promote translocation of import substrates through the nuclear pore complex (NPC) by an energy requiring, Ran-dependent mechanism. At the nucleoplasmic side of the NPC, Ran binds to importin, the importin/substrate complex dissociates and importin is re-exported from the nucleus to the cytoplasm where GTP hydrolysis releases Ran. The directionality of nuclear import is thought to be conferred by an asymmetric distribution of the GTP- and GDP-bound forms of Ran between the cytoplasm and nucleus. Mediates autonomously the nuclear import of ribosomal proteins RPL23A, RPS7 and RPL5. In association with KPNB1 mediates the nuclear import of H1 histone and the Ran-binding site of IPO7 is not required but synergizes with that of KPNB1 in importin/substrate complex dissociation. Promotes odontoblast differentiation via promoting nuclear translocation of DLX3, KLF4, SMAD2, thereby facilitating the transcription of target genes that play a role in odontoblast differentiation. Facilitates BMP4-induced translocation of SMAD1 to the nucleus and recruitment to the MSX1 gene promoter, thereby promotes the expression of the odontogenic regulator MSX1 in dental mesenchymal cells. Also promotes odontoblast differentiation by facilitating the nuclear translocation of HDAC6 and subsequent repression of RUNX2 expression. Inhibits osteoblast differentiation by inhibiting nuclear translocation of RUNX2 and therefore inhibition of RUNX2 target gene transcription. In vitro, mediates nuclear import of H2A, H2B, H3 and H4 histones. (Microbial infection) Mediates the nuclear import of HIV-1 reverse transcription complex (RTC) integrase. Binds and mediates the nuclear import of HIV-1 Rev. The chain is Importin-7 (IPO7) from Homo sapiens (Human).